Reading from the N-terminus, the 121-residue chain is MNNAPHLYFAWQQLVEKSQLMLRLATEEQWDELIASEMAYVNAVQEIAHLTEEVAPSTTMQEQLRPMLHLILDNESKVKQLLQIRMDELAKLVGQSSVQKSVLSAYGDQGGFVLAPQDNLF.

Positions Met1–Leu50 are required for homodimerization. The segment at Met60–Val98 is fliD binding.

Belongs to the FliT family. Homodimer. Interacts with FliD and FlhC.

It localises to the cytoplasm. Its subcellular location is the cytosol. Dual-function protein that regulates the transcription of class 2 flagellar operons and that also acts as an export chaperone for the filament-capping protein FliD. As a transcriptional regulator, acts as an anti-FlhDC factor; it directly binds FlhC, thus inhibiting the binding of the FlhC/FlhD complex to class 2 promoters, resulting in decreased expression of class 2 flagellar operons. As a chaperone, effects FliD transition to the membrane by preventing its premature polymerization, and by directing it to the export apparatus. The chain is Flagellar protein FliT from Shigella flexneri serotype 5b (strain 8401).